The chain runs to 478 residues: 3-ketoacyl-CoA synthase 3 (478 aa).

Positions 1–25 (MDLLVMLLSLLVSYLIFKIWKRIDS) are cleaved as a signal peptide. Residues 26–313 (KRDQNCYILD…FMLCLLLKKL (288 aa)) form the FAE domain. Active-site residues include Cys-168, His-247, His-345, His-349, His-378, and Asn-382.

This sequence belongs to the thiolase-like superfamily. Chalcone/stilbene synthases family. Expressed in siliques, leaves, stems and seedlings.

Its subcellular location is the endoplasmic reticulum. It carries out the reaction a very-long-chain acyl-CoA + malonyl-CoA + H(+) = a very-long-chain 3-oxoacyl-CoA + CO2 + CoA. It functions in the pathway lipid metabolism; fatty acid biosynthesis. This Arabidopsis thaliana (Mouse-ear cress) protein is 3-ketoacyl-CoA synthase 3.